A 118-amino-acid polypeptide reads, in one-letter code: Ribonuclease P protein component (118 aa).

This sequence belongs to the RnpA family. In terms of assembly, consists of a catalytic RNA component (M1 or rnpB) and a protein subunit.

The enzyme catalyses Endonucleolytic cleavage of RNA, removing 5'-extranucleotides from tRNA precursor.. RNaseP catalyzes the removal of the 5'-leader sequence from pre-tRNA to produce the mature 5'-terminus. It can also cleave other RNA substrates such as 4.5S RNA. The protein component plays an auxiliary but essential role in vivo by binding to the 5'-leader sequence and broadening the substrate specificity of the ribozyme. The protein is Ribonuclease P protein component of Rickettsia typhi (strain ATCC VR-144 / Wilmington).